Consider the following 343-residue polypeptide: MIEFKDVTKTFDAKQGAVHAVQDVNLKIEDGHIYGIVGYSGAGKSTLVRMLNGLETPTSGSVVIDDVNITTLSGAKLRAQRQKIGMIFQHFNLLWSRTVLENIMFPLEIAGLSKVDARKKAEHLADLVGLAGRETAYPSELSGGQKQRVGIARALANDPQILLSDEATSALDPQTTDEVLDLLLSINQKLHLTIVLITHEMHVIRKIADHVAVMEAGKIVEQGPVLEVFKRPQQAVTKRFVNEEVTPSLNDTTVVVDQLLAKYPKGTIVQLTFHGDQAQLPIVSEMLKKYPLDLNIIEGGIHQTQEGAIGSLYLQLTGDQEQIKGALAYLQTMRVETEVLNRE.

The region spanning 2–241 (IEFKDVTKTF…PQQAVTKRFV (240 aa)) is the ABC transporter domain. 38–45 (GYSGAGKS) contributes to the ATP binding site.

The protein belongs to the ABC transporter superfamily. Methionine importer (TC 3.A.1.24) family. In terms of assembly, the complex is composed of two ATP-binding proteins (MetN), two transmembrane proteins (MetI) and a solute-binding protein (MetQ).

Its subcellular location is the cell membrane. The catalysed reaction is L-methionine(out) + ATP + H2O = L-methionine(in) + ADP + phosphate + H(+). It catalyses the reaction D-methionine(out) + ATP + H2O = D-methionine(in) + ADP + phosphate + H(+). In terms of biological role, part of the ABC transporter complex MetNIQ involved in methionine import. Responsible for energy coupling to the transport system. The chain is Methionine import ATP-binding protein MetN 2 from Lactiplantibacillus plantarum (strain ATCC BAA-793 / NCIMB 8826 / WCFS1) (Lactobacillus plantarum).